The sequence spans 1113 residues: Myosin-binding protein 1 (1113 aa).

A helical membrane pass occupies residues 12–34 (LAFNEWLLMFMLFVNSIFSYVIA). The tract at residues 209-229 (ESEAVFSDTEPKQESSLNHLP) is disordered. One can recognise a GTD-binding domain in the interval 888-986 (SEGDRLKRQV…DLEAEIEYFR (99 aa)).

In terms of assembly, interacts with myosin XI-K, XI-I and XI-1. As to expression, expressed in leaf epidermal cells, roots and root hairs.

It localises to the endomembrane system. In terms of biological role, membrane-anchored myosin receptors that define a distinct, plant-specific transport vesicle compartment. This is Myosin-binding protein 1 from Arabidopsis thaliana (Mouse-ear cress).